The following is a 173-amino-acid chain: MARVEL domain-containing protein 1 (173 aa).

Methionine 1 bears the N-acetylmethionine mark. Residues methionine 1–serine 29 are Cytoplasmic-facing. In terms of domain architecture, MARVEL spans phenylalanine 26–cysteine 166. Residues proline 30 to alanine 50 form a helical membrane-spanning segment. At threonine 51–histidine 59 the chain is on the extracellular side. A helical membrane pass occupies residues phenylalanine 60–leucine 80. Over leucine 81–tryptophan 94 the chain is Cytoplasmic. Residues leucine 95 to isoleucine 115 traverse the membrane as a helical segment. Topologically, residues methionine 116–histidine 138 are extracellular. A helical membrane pass occupies residues alanine 139–leucine 159. The Cytoplasmic segment spans residues tyrosine 160 to alanine 173.

Widely expressed in normal tissues. Down-regulated in multiple primary tumors.

It localises to the cell membrane. It is found in the cytoplasm. The protein localises to the cytoskeleton. The protein resides in the nucleus. Its function is as follows. Microtubule-associated protein that exhibits cell cycle-dependent localization and can inhibit cell proliferation and migration. In Homo sapiens (Human), this protein is MARVEL domain-containing protein 1 (MARVELD1).